The primary structure comprises 789 residues: Tax1-binding protein 1 (789 aa).

Residues serine 124, serine 138, and serine 225 each carry the phosphoserine modification. The stretch at 144–599 forms a coiled coil; it reads TTKAGLLELK…LKRSLENPAE (456 aa). Residues 320–420 form an oligomerization region; it reads EEIGRLQLCL…ELKLNAMKKD (101 aa). Residues 481–502 show a composition bias toward polar residues; that stretch reads TGNQQKVNDASVNTDPATSAST. Positions 481–508 are disordered; sequence TGNQQKVNDASVNTDPATSASTVDVKPS. Serine 593 is modified (phosphoserine; by IKKA). Phosphoserine is present on serine 609. A disordered region spans residues 639-660; that stretch reads YASQETRDGADGAFYPDEIQRP. Serine 666 bears the Phosphoserine; by IKKA mark. Residues 678–712 are disordered; it reads PARNFSRPDGLEDSEDSKEDENVPTAPDPPSQHLR. UBZ1-type zinc fingers lie at residues 727-753 and 754-780; these read HKKC…VESH and WKVC…VQTH. 8 residues coordinate Zn(2+): cysteine 730, cysteine 733, histidine 749, histidine 753, cysteine 757, cysteine 760, histidine 776, and histidine 780.

As to quaternary structure, homooligomer. Interacts with TNFAIP3. Interacts with STARD13. Interacts with MYO6. Interacts with TOM1; the interaction is indirect and is mediated by MYO6, which acts as a bridge between TOM1 and TAX1BP1. Interacts with MAVS; this interaction induces MAVS polyubiquitination. Interacts with TNIP1. Interacts with TRAF6; this interaction mediates deubiquitination of TRAF6 and inhibition of NF-kappa-B activation. Interacts with RIPK1; this interaction negatively regulates RIPK1 ubiquitination. Interacts with NBR1. Interacts with TBK1. Interacts with RB1CC1. Interacts with SQSTM1. Interacts with AZI2. Interacts with TICAM1 and TRIM32; these interactions target TICAM1 to TAX1BP1-mediated selective autophagic degradation. In terms of assembly, (Microbial infection) Interacts with the HTLV-1 protein Tax. (Microbial infection) Interacts with Respiratory syncytial virus protein N; this interaction may promote viral growth by inhibiting the innate immune response. As to quaternary structure, (Microbial infection) Interacts with Lassa virus protein Z. In terms of assembly, (Microbial infection) Interacts with Mopeia virus protein Z. Phosphorylated in the C-terminal region by CHUK/IKKA leading to NF-kappa-B signaling down-regulation. As to expression, expressed in all tissues tested.

Its subcellular location is the cytoplasm. It is found in the mitochondrion. It localises to the preautophagosomal structure. The protein localises to the cytoplasmic vesicle. The protein resides in the autophagosome. Its function is as follows. Ubiquitin-binding adapter that participates in inflammatory, antiviral and innate immune processes as well as selective autophagy regulation. Plays a key role in the negative regulation of NF-kappa-B and IRF3 signalings by acting as an adapter for the ubiquitin-editing enzyme A20/TNFAIP3 to bind and inactivate its substrates. Disrupts the interactions between the E3 ubiquitin ligase TRAF3 and TBK1/IKBKE to attenuate 'Lys63'-linked polyubiquitination of TBK1 and thereby IFN-beta production. Also recruits A20/TNFAIP3 to ubiquitinated signaling proteins TRAF6 and RIPK1, leading to their deubiquitination and disruption of IL-1 and TNF-induced NF-kappa-B signaling pathways. Inhibits virus-induced apoptosis by inducing the 'Lys-48'-linked polyubiquitination and degradation of MAVS via recruitment of the E3 ligase ITCH, thereby attenuating MAVS-mediated apoptosis signaling. As a macroautophagy/autophagy receptor, facilitates the xenophagic clearance of pathogenic bacteria such as Salmonella typhimurium and Mycobacterium tuberculosis. Upon NBR1 recruitment to the SQSTM1-ubiquitin condensates, acts as the major recruiter of RB1CC1 to these ubiquitin condensates to promote their autophagic degradation. Mediates the autophagic degradation of other substrates including TICAM1. This is Tax1-binding protein 1 (TAX1BP1) from Homo sapiens (Human).